Here is a 71-residue protein sequence, read N- to C-terminus: Large ribosomal subunit protein bL31 (71 aa).

4 residues coordinate Zn(2+): Cys-16, Cys-18, Cys-38, and Cys-41.

Belongs to the bacterial ribosomal protein bL31 family. Type A subfamily. Part of the 50S ribosomal subunit. Zn(2+) is required as a cofactor.

Functionally, binds the 23S rRNA. The polypeptide is Large ribosomal subunit protein bL31 (Francisella tularensis subsp. novicida (strain U112)).